The primary structure comprises 151 residues: Cytochrome c-type biogenesis protein CcmE (151 aa).

Over 1–8 the chain is Cytoplasmic; the sequence is MNPLRKKR. A helical; Signal-anchor for type II membrane protein membrane pass occupies residues 9-29; the sequence is LLIILAILVGVGIAVGLALSA. Residues 30–151 are Periplasmic-facing; sequence LKENINLFYT…QSAPTPAKEG (122 aa). Heme-binding residues include His124 and Tyr128. The interval 131-151 is disordered; sequence PEVTKALKDSGQSAPTPAKEG.

The protein belongs to the CcmE/CycJ family.

The protein resides in the cell inner membrane. Functionally, heme chaperone required for the biogenesis of c-type cytochromes. Transiently binds heme delivered by CcmC and transfers the heme to apo-cytochromes in a process facilitated by CcmF and CcmH. The chain is Cytochrome c-type biogenesis protein CcmE from Pseudomonas fluorescens (strain ATCC BAA-477 / NRRL B-23932 / Pf-5).